A 199-amino-acid chain; its full sequence is Peptidyl-tRNA hydrolase (199 aa).

Tyr15 contributes to the tRNA binding site. His20 acts as the Proton acceptor in catalysis. TRNA is bound by residues Tyr66, Asn68, and Asn114.

This sequence belongs to the PTH family. Monomer.

It is found in the cytoplasm. It carries out the reaction an N-acyl-L-alpha-aminoacyl-tRNA + H2O = an N-acyl-L-amino acid + a tRNA + H(+). In terms of biological role, hydrolyzes ribosome-free peptidyl-tRNAs (with 1 or more amino acids incorporated), which drop off the ribosome during protein synthesis, or as a result of ribosome stalling. Functionally, catalyzes the release of premature peptidyl moieties from peptidyl-tRNA molecules trapped in stalled 50S ribosomal subunits, and thus maintains levels of free tRNAs and 50S ribosomes. This chain is Peptidyl-tRNA hydrolase, found in Burkholderia cenocepacia (strain ATCC BAA-245 / DSM 16553 / LMG 16656 / NCTC 13227 / J2315 / CF5610) (Burkholderia cepacia (strain J2315)).